We begin with the raw amino-acid sequence, 359 residues long: Protein mab-21-like 2 (359 aa).

It belongs to the mab-21 family.

Its subcellular location is the nucleus. The protein localises to the cytoplasm. Required for several aspects of embryonic development including normal development of the eye. In Xenopus tropicalis (Western clawed frog), this protein is Protein mab-21-like 2 (mab21l2).